Here is a 123-residue protein sequence, read N- to C-terminus: Holo-[acyl-carrier-protein] synthase (123 aa).

Positions 8 and 60 each coordinate Mg(2+).

The protein belongs to the P-Pant transferase superfamily. AcpS family. It depends on Mg(2+) as a cofactor.

Its subcellular location is the cytoplasm. It carries out the reaction apo-[ACP] + CoA = holo-[ACP] + adenosine 3',5'-bisphosphate + H(+). Functionally, transfers the 4'-phosphopantetheine moiety from coenzyme A to a Ser of acyl-carrier-protein. This is Holo-[acyl-carrier-protein] synthase from Ehrlichia chaffeensis (strain ATCC CRL-10679 / Arkansas).